A 156-amino-acid chain; its full sequence is Small ribosomal subunit protein uS7 (156 aa).

This sequence belongs to the universal ribosomal protein uS7 family. Part of the 30S ribosomal subunit. Contacts proteins S9 and S11.

One of the primary rRNA binding proteins, it binds directly to 16S rRNA where it nucleates assembly of the head domain of the 30S subunit. Is located at the subunit interface close to the decoding center, probably blocks exit of the E-site tRNA. The protein is Small ribosomal subunit protein uS7 of Lactobacillus johnsonii (strain CNCM I-12250 / La1 / NCC 533).